The primary structure comprises 158 residues: UPF0260 protein RL1394 (158 aa).

The protein belongs to the UPF0260 family.

This is UPF0260 protein RL1394 from Rhizobium johnstonii (strain DSM 114642 / LMG 32736 / 3841) (Rhizobium leguminosarum bv. viciae).